Consider the following 129-residue polypeptide: Small ribosomal subunit protein uS12 (129 aa).

Disordered stretches follow at residues 1–25 and 110–129; these read MPTYNQLVRFGRKSKTRKTKSPALE and RKQGRSRYGAPRKQVAVTKK. Basic residues predominate over residues 10 to 20; that stretch reads FGRKSKTRKTK.

This sequence belongs to the universal ribosomal protein uS12 family. Part of the 30S ribosomal subunit. Contacts proteins S8 and S17. May interact with IF1 in the 30S initiation complex.

In terms of biological role, with S4 and S5 plays an important role in translational accuracy. Functionally, interacts with and stabilizes bases of the 16S rRNA that are involved in tRNA selection in the A site and with the mRNA backbone. Located at the interface of the 30S and 50S subunits, it traverses the body of the 30S subunit contacting proteins on the other side and probably holding the rRNA structure together. The combined cluster of proteins S8, S12 and S17 appears to hold together the shoulder and platform of the 30S subunit. This Rickettsia conorii (strain ATCC VR-613 / Malish 7) protein is Small ribosomal subunit protein uS12.